The sequence spans 668 residues: UvrABC system protein B (668 aa).

Residues 25 to 414 (RGLHAGARFQ…IVEQLIRPTG (390 aa)) enclose the Helicase ATP-binding domain. 38–45 (GVTGSGKT) is an ATP binding site. Residues 91–114 (YYDYYQPESYVPARDLYIEKDASI) carry the Beta-hairpin motif. Residues 431–594 (DICQRVKACS…TIKKSIEDIL (164 aa)) form the Helicase C-terminal domain. Residues 627–662 (KKMVQALRLHMKVCARELRFEEAALIRDKILQLQRQ) enclose the UVR domain.

Belongs to the UvrB family. In terms of assembly, forms a heterotetramer with UvrA during the search for lesions. Interacts with UvrC in an incision complex.

The protein localises to the cytoplasm. Its function is as follows. The UvrABC repair system catalyzes the recognition and processing of DNA lesions. A damage recognition complex composed of 2 UvrA and 2 UvrB subunits scans DNA for abnormalities. Upon binding of the UvrA(2)B(2) complex to a putative damaged site, the DNA wraps around one UvrB monomer. DNA wrap is dependent on ATP binding by UvrB and probably causes local melting of the DNA helix, facilitating insertion of UvrB beta-hairpin between the DNA strands. Then UvrB probes one DNA strand for the presence of a lesion. If a lesion is found the UvrA subunits dissociate and the UvrB-DNA preincision complex is formed. This complex is subsequently bound by UvrC and the second UvrB is released. If no lesion is found, the DNA wraps around the other UvrB subunit that will check the other stand for damage. This is UvrABC system protein B from Treponema pallidum (strain Nichols).